A 125-amino-acid polypeptide reads, in one-letter code: Photosystem I reaction center subunit IV, chloroplastic (125 aa).

Residues 1-34 (MASIASSVAVRLGLTQVLPNKNFSSPRSTRLVVR) constitute a chloroplast transit peptide. Over residues 42-57 (APAAASPEGEAPKAAA) the composition is skewed to low complexity. The tract at residues 42–68 (APAAASPEGEAPKAAAKPPPIGPKRGS) is disordered.

Belongs to the PsaE family.

It localises to the plastid. The protein localises to the chloroplast thylakoid membrane. In terms of biological role, stabilizes the interaction between PsaC and the PSI core, assists the docking of the ferredoxin to PSI and interacts with ferredoxin-NADP oxidoreductase. This Spinacia oleracea (Spinach) protein is Photosystem I reaction center subunit IV, chloroplastic (PSAE-1).